A 697-amino-acid polypeptide reads, in one-letter code: Polyribonucleotide nucleotidyltransferase (697 aa).

Mg(2+) contacts are provided by Asp484 and Asp490. The KH domain maps to 551-610; that stretch reads PRITTIWVKTDKIRDVIGSGGKNIRGITEATGVSIDIEDSGRINIASTSKEACDKAIKMI. The S1 motif domain maps to 620–688; sequence GKLYMGTVKK…KQGKIKLSRK (69 aa).

Belongs to the polyribonucleotide nucleotidyltransferase family. Requires Mg(2+) as cofactor.

It is found in the cytoplasm. It carries out the reaction RNA(n+1) + phosphate = RNA(n) + a ribonucleoside 5'-diphosphate. Its function is as follows. Involved in mRNA degradation. Catalyzes the phosphorolysis of single-stranded polyribonucleotides processively in the 3'- to 5'-direction. The protein is Polyribonucleotide nucleotidyltransferase of Geobacter sulfurreducens (strain ATCC 51573 / DSM 12127 / PCA).